A 254-amino-acid polypeptide reads, in one-letter code: Phosphoribosylaminoimidazole-succinocarboxamide synthase (254 aa).

The protein belongs to the SAICAR synthetase family.

The catalysed reaction is 5-amino-1-(5-phospho-D-ribosyl)imidazole-4-carboxylate + L-aspartate + ATP = (2S)-2-[5-amino-1-(5-phospho-beta-D-ribosyl)imidazole-4-carboxamido]succinate + ADP + phosphate + 2 H(+). Its pathway is purine metabolism; IMP biosynthesis via de novo pathway; 5-amino-1-(5-phospho-D-ribosyl)imidazole-4-carboxamide from 5-amino-1-(5-phospho-D-ribosyl)imidazole-4-carboxylate: step 1/2. The sequence is that of Phosphoribosylaminoimidazole-succinocarboxamide synthase from Brucella canis (strain ATCC 23365 / NCTC 10854 / RM-666).